A 458-amino-acid chain; its full sequence is ATP synthase subunit beta (458 aa).

148–155 contacts ATP; it reads GGAGVGKT.

Belongs to the ATPase alpha/beta chains family. In terms of assembly, F-type ATPases have 2 components, CF(1) - the catalytic core - and CF(0) - the membrane proton channel. CF(1) has five subunits: alpha(3), beta(3), gamma(1), delta(1), epsilon(1). CF(0) has three main subunits: a(1), b(2) and c(9-12). The alpha and beta chains form an alternating ring which encloses part of the gamma chain. CF(1) is attached to CF(0) by a central stalk formed by the gamma and epsilon chains, while a peripheral stalk is formed by the delta and b chains.

It is found in the cell inner membrane. It catalyses the reaction ATP + H2O + 4 H(+)(in) = ADP + phosphate + 5 H(+)(out). In terms of biological role, produces ATP from ADP in the presence of a proton gradient across the membrane. The catalytic sites are hosted primarily by the beta subunits. The protein is ATP synthase subunit beta of Mannheimia succiniciproducens (strain KCTC 0769BP / MBEL55E).